The chain runs to 360 residues: Decorin (360 aa).

The first 16 residues, 1-16, serve as a signal peptide directing secretion; it reads MKATIIFFLVAQVSWA. A propeptide spanning residues 17–30 is cleaved from the precursor; it reads GPFQQKGLFDFMLE. O-linked (Xyl...) (glycosaminoglycan) serine glycosylation occurs at Ser34. 2 disulfides stabilise this stretch: Cys55/Cys61 and Cys59/Cys68. LRR repeat units follow at residues 74 to 94, 95 to 118, 119 to 142, 143 to 163, 164 to 187, 188 to 213, 214 to 234, 235 to 258, 259 to 282, 283 to 305, 306 to 335, and 336 to 360; these read EKVP…NNKI, TEIK…NNKI, SKIS…KNQL, KELP…ENEI, TKVR…TNPL, KSSG…DTNI, TTIP…GNKI, TKVD…FNSI, SAVD…NNKL, VKVP…NNNI, SAIG…SNPV, and QYWE…GNYK. Asn212 is a glycosylation site (N-linked (GlcNAc...) asparagine). Asn263 and Asn304 each carry an N-linked (GlcNAc...) asparagine glycan. Cys314 and Cys347 are disulfide-bonded.

This sequence belongs to the small leucine-rich proteoglycan (SLRP) family. SLRP class I subfamily. As to quaternary structure, binds to type I and type II collagen, fibronectin and TGF-beta. Forms a ternary complex with MFAP2 and ELN. Interacts with DPT. The attached glycosaminoglycan chain can be either chondroitin sulfate or dermatan sulfate depending upon the tissue of origin.

It localises to the secreted. The protein localises to the extracellular space. It is found in the extracellular matrix. May affect the rate of fibrils formation. In Ovis aries (Sheep), this protein is Decorin (DCN).